A 535-amino-acid chain; its full sequence is Arylsulfatase K (535 aa).

An N-terminal signal peptide occupies residues 1-22 (MLLLWLSVFAASALAAPDRGAG). Ca(2+) contacts are provided by D44 and C84. The active-site Nucleophile is the C84. C84 is subject to 3-oxoalanine (Cys). N112 carries N-linked (GlcNAc...) asparagine glycosylation. K132 contacts substrate. An N-linked (GlcNAc...) asparagine glycan is attached at N197. H255 serves as a coordination point for substrate. N266 carries an N-linked (GlcNAc...) asparagine glycan. D317 and H318 together coordinate Ca(2+). 3 N-linked (GlcNAc...) asparagine glycosylation sites follow: N379, N417, and N502.

The protein belongs to the sulfatase family. Ca(2+) serves as cofactor. The conversion to 3-oxoalanine (also known as C-formylglycine, FGly), of a serine or cysteine residue in prokaryotes and of a cysteine residue in eukaryotes, is critical for catalytic activity. In terms of processing, the 75-kDa precursor undergoes proteolytic processing to yield a 23 kDa form. Post-translationally, N-glycosylated with both high mannose and complex type sugars.

It is found in the secreted. The protein localises to the lysosome. The catalysed reaction is an aryl sulfate + H2O = a phenol + sulfate + H(+). The enzyme catalyses Hydrolysis of the 2-sulfate groups of the 2-O-sulfo-D-glucuronate residues of chondroitin sulfate, heparin and heparitin sulfate.. Functionally, catalyzes the hydrolysis of pseudosubstrates such as p-nitrocatechol sulfate and p-nitrophenyl sulfate. Catalyzes the hydrolysis of the 2-sulfate groups of the 2-O-sulfo-D-glucuronate residues of chondroitin sulfate, heparin and heparitin sulfate. Acts selectively on 2-sulfoglucuronate and lacks activity against 2-sulfoiduronate. This chain is Arylsulfatase K (ARSK), found in Canis lupus familiaris (Dog).